Reading from the N-terminus, the 195-residue chain is uncharacterized protein (195 aa).

This is an uncharacterized protein from Magallana gigas (Pacific oyster).